Consider the following 70-residue polypeptide: Translational regulator CsrA (70 aa).

The protein belongs to the CsrA/RsmA family. Homodimer; the beta-strands of each monomer intercalate to form a hydrophobic core, while the alpha-helices form wings that extend away from the core.

The protein localises to the cytoplasm. Functionally, a translational regulator that binds mRNA to regulate translation initiation and/or mRNA stability. Usually binds in the 5'-UTR at or near the Shine-Dalgarno sequence preventing ribosome-binding, thus repressing translation. Its main target seems to be the major flagellin gene, while its function is anatagonized by FliW. This is Translational regulator CsrA from Rhodopirellula baltica (strain DSM 10527 / NCIMB 13988 / SH1).